A 567-amino-acid polypeptide reads, in one-letter code: Urease subunit alpha (567 aa).

The 439-residue stretch at 129–567 (GGIDSHIHFI…LPLAQRYFLF (439 aa)) folds into the Urease domain. Residues His134, His136, and Lys217 each contribute to the Ni(2+) site. Lys217 carries the post-translational modification N6-carboxylysine. His219 contributes to the substrate binding site. Residues His246 and His272 each contribute to the Ni(2+) site. The active-site Proton donor is His320. A Ni(2+)-binding site is contributed by Asp360.

It belongs to the metallo-dependent hydrolases superfamily. Urease alpha subunit family. Heterotrimer of UreA (gamma), UreB (beta) and UreC (alpha) subunits. Three heterotrimers associate to form the active enzyme. It depends on Ni cation as a cofactor. Carboxylation allows a single lysine to coordinate two nickel ions.

It is found in the cytoplasm. It catalyses the reaction urea + 2 H2O + H(+) = hydrogencarbonate + 2 NH4(+). It participates in nitrogen metabolism; urea degradation; CO(2) and NH(3) from urea (urease route): step 1/1. In Pseudomonas entomophila (strain L48), this protein is Urease subunit alpha.